We begin with the raw amino-acid sequence, 414 residues long: MKTIKDRIAKWSAIGLLSAVAATAFYAPSASAHGEKSQAAFMRMRTIHWYDLSWSKEKVKINETVEIKGKFHVFEGWPETVDEPDVAFLNVGMPGPVFIRKESYIGGQLVPRSVRLEIGKTYDFRVVLKARRPGDWHVHTMMNVQGGGPIIGPGKWITVEGSMSEFRNPVTTLTGQTVDLENYNEGNTYFWHAFWFAIGVAWIGYWSRRPIFIPRLLMVDAGRADELVSATDRKVAMGFLAATILIVVMAMSSANSKYPITIPLQAGTMRGMKPLELPAPTVSVKVEDATYRVPGRAMRMKLTITNHGNSPIRLGEFYTASVRFLDSDVYKDTTGYPEDLLAEDGLSVSDNSPLAPGETRTVDVTASDAAWEVYRLSDIIYDPDSRFAGLLFFFDATGNRQVVQIDAPLIPSFM.

Positions Met-1–Ala-32 are cleaved as a signal peptide. Positions 33, 48, 72, 137, and 139 each coordinate Cu cation. The segment at His-33–Thr-172 is cupredoxin domain used to construct soluble pmoB (spmoB). A run of 2 helical transmembrane segments spans residues Gly-186–Trp-206 and Val-235–Asn-255. Positions Gln-265–Met-414 are cupredoxin domain used to construct soluble pmoB (spmoB).

In terms of assembly, m.capsulatus has two forms of methane monooxygenase, a soluble (sMMO) and a membrane-bound (particulate) type (pMMO). The particulate type is a nonamer composed of three alpha:beta:gamma heterotrimeric protomers assembled into a cylindrical structure; the beta and gamma subunits comprise the bulk of the membrane-spanning regions and the soluble regions are derived primarily from alpha subunits which form two antiparallel beta-barrel-like structures each. This assembly, also called pMMO hydroxylase (pMMO-H), is proposed to associate with methanol dehydrogenase (MDH), also designated as pMMO-R, to form the pMMO-C complex which seems to have greater methane monooxygenase activity. Cu(2+) serves as cofactor.

The protein localises to the membrane. The catalysed reaction is methane + a quinol + O2 = methanol + a quinone + H2O. Functionally, methane monooxygenase is responsible for the initial oxygenation of methane to methanol in methanotrophs. At least in vitro, specific quinols can replace NADH as reductants. The polypeptide is Particulate methane monooxygenase alpha subunit (pmoB1) (Methylococcus capsulatus (strain ATCC 33009 / NCIMB 11132 / Bath)).